The sequence spans 488 residues: UDP-glycosyltransferase 92A1 (488 aa).

UDP-alpha-D-glucose is bound by residues Ser-292, 358–360, 375–383, and 397–400; these read APQ, HCGWNSILE, and AAEQ.

This sequence belongs to the UDP-glycosyltransferase family.

This Arabidopsis thaliana (Mouse-ear cress) protein is UDP-glycosyltransferase 92A1 (UGT92A1).